The following is a 388-amino-acid chain: Lipid-A-disaccharide synthase (388 aa).

This sequence belongs to the LpxB family.

It catalyses the reaction a lipid X + a UDP-2-N,3-O-bis[(3R)-3-hydroxyacyl]-alpha-D-glucosamine = a lipid A disaccharide + UDP + H(+). The protein operates within bacterial outer membrane biogenesis; LPS lipid A biosynthesis. Condensation of UDP-2,3-diacylglucosamine and 2,3-diacylglucosamine-1-phosphate to form lipid A disaccharide, a precursor of lipid A, a phosphorylated glycolipid that anchors the lipopolysaccharide to the outer membrane of the cell. The chain is Lipid-A-disaccharide synthase from Burkholderia mallei (strain ATCC 23344).